The sequence spans 464 residues: Soluble pyridine nucleotide transhydrogenase (464 aa).

35–44 (DSRRQVGGNC) is a binding site for FAD.

Belongs to the class-I pyridine nucleotide-disulfide oxidoreductase family. It depends on FAD as a cofactor.

It localises to the cytoplasm. It carries out the reaction NAD(+) + NADPH = NADH + NADP(+). Its function is as follows. Conversion of NADPH, generated by peripheral catabolic pathways, to NADH, which can enter the respiratory chain for energy generation. This is Soluble pyridine nucleotide transhydrogenase from Pseudomonas fluorescens (strain SBW25).